Here is a 162-residue protein sequence, read N- to C-terminus: Putative ripening-related protein 7 (162 aa).

Positions 1–30 (MAAAAASTKIVAVVVAVLLAILEMPSCAVA) are cleaved as a signal peptide.

Belongs to the kiwellin family.

It localises to the secreted. This chain is Putative ripening-related protein 7, found in Oryza sativa subsp. japonica (Rice).